The following is a 479-amino-acid chain: Solute carrier family 46 member 2 (479 aa).

Residues 1-23 (MGPGGTCPWSSRLSGFRVRTWIE) are Cytoplasmic-facing. The chain crosses the membrane as a helical span at residues 24–44 (PVVASTQVAGSLYDAGLLLVV). Topologically, residues 45–80 (KESFKSEAGGSSNYSANQSLVEYQEDQQQKAISNFN) are extracellular. N-linked (GlcNAc...) asparagine glycans are attached at residues N57 and N61. A helical transmembrane segment spans residues 81–101 (IIYNLVLGLTPLLSAYGLGWL). At 102–110 (SDRYHRKIS) the chain is on the cytoplasmic side. A helical membrane pass occupies residues 111-131 (ICTAMLGFLLSRIGLLLKVML). Topologically, residues 132–140 (DWPVEVMYG) are extracellular. Residues 141-161 (AAALNGLCGSFSAYWSGVMAL) traverse the membrane as a helical segment. Residues 162 to 174 (GSLGCSEGRRSVR) lie on the Cytoplasmic side of the membrane. A helical membrane pass occupies residues 175–195 (LILIDLVLGLAGFSGSMASGH). Residues 196-207 (LFKQIVGHSAQG) are Extracellular-facing. The helical transmembrane segment at 208 to 228 (LLLTACSVGCAAFALFYSLFV) threads the bilayer. Over 229–281 (LKVPESKPNKVHPTVDTVSGMMGTYRTLDPDQQDKQNVPRNPRTPGKGKSSQR) the chain is Cytoplasmic. Positions 255–277 (TLDPDQQDKQNVPRNPRTPGKGK) are disordered. A helical transmembrane segment spans residues 282–302 (EVVALLFVGAIIYDLAAVGTV). At 303–321 (DVMALFVLKEPLHWNQVQL) the chain is on the extracellular side. A helical membrane pass occupies residues 322–342 (GYGMASGYIIFITSFLGVLVF). Residues 343 to 348 (SRCFRD) lie on the Cytoplasmic side of the membrane. The helical transmembrane segment at 349–369 (TTMIIIGMLSFGSGALLLAFV) threads the bilayer. Topologically, residues 370–371 (KE) are extracellular. The helical transmembrane segment at 372-392 (TYMFYIARAIMLFALIPITTI) threads the bilayer. The Cytoplasmic portion of the chain corresponds to 393 to 407 (RSAMSKLIKDSSYGK). Residues 408-428 (IFVILQLCLTLTGVVTSTIYN) traverse the membrane as a helical segment. Topologically, residues 429–441 (KIYQLTLDKFIGT) are extracellular. Residues 442-462 (CFVLSSFLSFLAIVPIGVVAY) form a helical membrane-spanning segment. Over 463–479 (KQVPRSQQGECAEKQRS) the chain is Cytoplasmic.

It belongs to the major facilitator superfamily. SLC46A family. Glycosylated. Expressed on cortical epithelial cells in the thymus. Mainly expressed in the thymic cortex and is highly enriched in SCID thymus. Also expressed in lymph nodes, heart, fetal liver, brain, spleen, intestine and kidney, but not in adult liver, skin, skeletal muscle and lung. Expressed in skin epidermis.

Its subcellular location is the endosome membrane. The protein localises to the cell membrane. It carries out the reaction N-acetyl-beta-D-glucosaminyl-(1-&gt;4)-1,6-anhydro-N-acetyl-beta-D-muramoyl-L-alanyl-gamma-D-glutamyl-meso-2,6-diaminopimeloyl-D-alanine(out) + n H(+)(out) = N-acetyl-beta-D-glucosaminyl-(1-&gt;4)-1,6-anhydro-N-acetyl-beta-D-muramoyl-L-alanyl-gamma-D-glutamyl-meso-2,6-diaminopimeloyl-D-alanine(in) + n H(+)(in). It catalyses the reaction L-alanyl-gamma-D-glutamyl-meso-2,6-diaminopimelate(out) + n H(+)(out) = L-alanyl-gamma-D-glutamyl-meso-2,6-diaminopimelate(in) + n H(+)(in). The catalysed reaction is N-acetyl-D-muramoyl-L-alanyl-D-isoglutamine(out) + n H(+)(out) = N-acetyl-D-muramoyl-L-alanyl-D-isoglutamine(in) + n H(+)(in). The enzyme catalyses 2',3'-cGAMP(out) + n H(+)(out) = 2',3'-cGAMP(in) + n H(+)(in). It carries out the reaction 3',3'-cGAMP(out) + n H(+)(out) = 3',3'-cGAMP(in) + n H(+)(in). Down-regulated by the anti-inflammatory drug methotrexate. Functionally, proton-coupled transporter that delivers pathogen-associated or danger-associated molecular patterns to cytosolic pattern recognition receptors as part of the innate immune response to microbes or tissue injury. Has selectivity toward muropeptides that contain the amino acid diaminopimelic acid (DAP-type peptidoglycan muropeptides) including Tri-DAP and tracheal toxin (TCT), common in Gram-negative bacteria and Gram-positive bacilli. In the context of immune recognition of skin microbiota, shuttles bacterial muropeptides across the endolysosomal membranes into the cytosol for recognition by NOD1, triggering MYD88-dependent secretion of IL1A and neutrophil recruitment in a pyroptosis-type inflammatory process. To a lesser extent and redundantly, transports muramyl dipeptides derived from most bacterial proteoglycans, eliciting NOD2 receptor activation and downstream inflammatory responses. Postulated to function as an importer of cyclic GMP-AMP dinucleotides (cGAMPs) in monocyte and macrophage cell lineages. Selectively imports cGAMPs derived from pathogenic bacteria such as 3'3'-cGAMP thus providing for differential immune recognition of pathogenic versus commensal bacteria. During tumorigenesis may transport extracellular tumor-derived 2'3'-cGAMP across the plasma membrane of M1-polarized macrophages to activate the anti-tumoral stimulator of interferon genes (STING) pathway. The transport mechanism, its electrogenicity and stoichiometry remain to be elucidated. This Mus musculus (Mouse) protein is Solute carrier family 46 member 2.